Reading from the N-terminus, the 428-residue chain is MSIIAITVFVAGYALIASDRVSKTRVALTCAAIMVGAGIVGSDDVFYSHEAGIDWDVIFLLLGMMIIVSVLRHTGVFEYVAIWAVKRANAAPLRIMILLVLVTALGSALLDNVTTVLLIAPVTLLVCDRLGVNSTPFLVAEVFASNVGGAATLVGDPPNIIIASRAGLTFNDFLIHMAPAVLVVMIALIGLLPWLLGSVTAEPDRVADVLSLNEREAIHDRGLLIKCGVVLVLVFAAFIAHPVLHIQPSLVALLGAGVLVRFSGLERSDYLSSVEWDTLLFFAGLFVMVGALVKTGVVEQLARAATELTGGNELLTVGLILGISAPVSGIIDNIPYVATMTPIVTELVAAMPGHVHPDTFWWALALSADFGGNLTAVAASANVVMLGIARRSGTPISFWKFTRKGAVVTAVSLVLSAVYLWLRYFVFG.

The next 10 helical transmembrane spans lie at 26–46, 51–71, 90–110, 135–155, 177–197, 223–243, 278–298, 314–334, 359–379, and 407–427; these read VALT…DDVF, AGID…VSVL, AAPL…SALL, TPFL…TLVG, MAPA…WLLG, LLIK…AHPV, TLLF…TGVV, LLTV…IDNI, TFWW…AVAA, and VVTA…YFVF.

This sequence belongs to the CitM (TC 2.A.11) transporter family.

It localises to the cell membrane. This is an uncharacterized protein from Mycobacterium tuberculosis (strain CDC 1551 / Oshkosh).